The primary structure comprises 316 residues: Pantothenate kinase (316 aa).

Position 99-106 (99-106) interacts with ATP; the sequence is GSVAVGKS.

It belongs to the prokaryotic pantothenate kinase family.

Its subcellular location is the cytoplasm. It carries out the reaction (R)-pantothenate + ATP = (R)-4'-phosphopantothenate + ADP + H(+). It participates in cofactor biosynthesis; coenzyme A biosynthesis; CoA from (R)-pantothenate: step 1/5. The protein is Pantothenate kinase (coaA) of Pasteurella multocida (strain Pm70).